A 358-amino-acid chain; its full sequence is Fructose-bisphosphate aldolase 3, cytoplasmic (358 aa).

Arginine 39 contributes to the substrate binding site. Glutamate 183 serves as the catalytic Proton acceptor. Lysine 225 serves as the catalytic Schiff-base intermediate with dihydroxyacetone-P. Substrate contacts are provided by residues 266–268 (SGG) and arginine 298.

Belongs to the class I fructose-bisphosphate aldolase family. In terms of assembly, homotetramer.

It localises to the cytoplasm. The protein resides in the cytosol. It carries out the reaction beta-D-fructose 1,6-bisphosphate = D-glyceraldehyde 3-phosphate + dihydroxyacetone phosphate. Its pathway is carbohydrate degradation; glycolysis; D-glyceraldehyde 3-phosphate and glycerone phosphate from D-glucose: step 4/4. Its function is as follows. Fructose-bisphosphate aldolase that plays a key role in glycolysis and gluconeogenesis. This is Fructose-bisphosphate aldolase 3, cytoplasmic from Oryza sativa subsp. japonica (Rice).